The primary structure comprises 303 residues: N-acetyl-D-glucosamine kinase (303 aa).

Residues 4 to 11 (GFDIGGTK) and 133 to 140 (GVGGGLVL) contribute to the ATP site. Zn(2+)-binding residues include H157, C177, C179, and C184.

This sequence belongs to the ROK (NagC/XylR) family. NagK subfamily.

The catalysed reaction is N-acetyl-D-glucosamine + ATP = N-acetyl-D-glucosamine 6-phosphate + ADP + H(+). It participates in cell wall biogenesis; peptidoglycan recycling. Catalyzes the phosphorylation of N-acetyl-D-glucosamine (GlcNAc) derived from cell-wall degradation, yielding GlcNAc-6-P. In Salmonella arizonae (strain ATCC BAA-731 / CDC346-86 / RSK2980), this protein is N-acetyl-D-glucosamine kinase.